The following is a 505-amino-acid chain: Megakaryocyte-associated tyrosine-protein kinase (505 aa).

One can recognise an SH3 domain in the interval 46–108 (APGTQCMTKC…AAAALRHGEA (63 aa)). One can recognise an SH2 domain in the interval 120–209 (WFHGKISGQE…AICTKLVKPR (90 aa)). In terms of domain architecture, Protein kinase spans 233 to 481 (LTLGAQIGEG…IVEKLGRELR (249 aa)). Residues 239–247 (IGEGEFGAV) and Lys-260 each bind ATP. Asp-350 acts as the Proton acceptor in catalysis. Residues 483 to 505 (VGVSAPAGGQEAEGSAPTRSQDP) are disordered.

It belongs to the protein kinase superfamily. Tyr protein kinase family. CSK subfamily. Interacts with KIT. As to expression, most abundant in brain, and to a lesser extent in the spleen, the thymus and the liver. Also found in the T-cell lineage.

It localises to the cytoplasm. The protein localises to the membrane. The enzyme catalyses L-tyrosyl-[protein] + ATP = O-phospho-L-tyrosyl-[protein] + ADP + H(+). Could play a significant role in the signal transduction of hematopoietic cells. May regulate tyrosine kinase activity of SRC-family members in brain by specifically phosphorylating their C-terminal regulatory tyrosine residue which acts as a negative regulatory site. It may play an inhibitory role in the control of T-cell proliferation. The polypeptide is Megakaryocyte-associated tyrosine-protein kinase (Matk) (Mus musculus (Mouse)).